We begin with the raw amino-acid sequence, 455 residues long: Bifunctional protein GlmU (455 aa).

Residues 1-230 form a pyrophosphorylase region; the sequence is MTKRNAIILA…FDESMGVNDR (230 aa). UDP-N-acetyl-alpha-D-glucosamine contacts are provided by residues 9–12, Lys23, Gln73, 78–79, 101–103, Gly140, Glu155, Asn170, and Asn228; these read LAAG, GT, and SGD. A Mg(2+)-binding site is contributed by Asp103. Asn228 is a Mg(2+) binding site. The linker stretch occupies residues 231–251; the sequence is VALARANKVMRNRINTHWMRE. The interval 252 to 455 is N-acetyltransferase; it reads GVSMIDPETT…KENYAKKLPW (204 aa). UDP-N-acetyl-alpha-D-glucosamine is bound by residues Arg333 and Lys351. Catalysis depends on His363, which acts as the Proton acceptor. Residues Tyr366 and Asn377 each coordinate UDP-N-acetyl-alpha-D-glucosamine. Acetyl-CoA contacts are provided by residues 386 to 387, Ser405, Ala423, and Arg440; that span reads NY.

This sequence in the N-terminal section; belongs to the N-acetylglucosamine-1-phosphate uridyltransferase family. It in the C-terminal section; belongs to the transferase hexapeptide repeat family. In terms of assembly, homotrimer. Requires Mg(2+) as cofactor.

The protein localises to the cytoplasm. It catalyses the reaction alpha-D-glucosamine 1-phosphate + acetyl-CoA = N-acetyl-alpha-D-glucosamine 1-phosphate + CoA + H(+). The enzyme catalyses N-acetyl-alpha-D-glucosamine 1-phosphate + UTP + H(+) = UDP-N-acetyl-alpha-D-glucosamine + diphosphate. It functions in the pathway nucleotide-sugar biosynthesis; UDP-N-acetyl-alpha-D-glucosamine biosynthesis; N-acetyl-alpha-D-glucosamine 1-phosphate from alpha-D-glucosamine 6-phosphate (route II): step 2/2. The protein operates within nucleotide-sugar biosynthesis; UDP-N-acetyl-alpha-D-glucosamine biosynthesis; UDP-N-acetyl-alpha-D-glucosamine from N-acetyl-alpha-D-glucosamine 1-phosphate: step 1/1. It participates in bacterial outer membrane biogenesis; LPS lipid A biosynthesis. Catalyzes the last two sequential reactions in the de novo biosynthetic pathway for UDP-N-acetylglucosamine (UDP-GlcNAc). The C-terminal domain catalyzes the transfer of acetyl group from acetyl coenzyme A to glucosamine-1-phosphate (GlcN-1-P) to produce N-acetylglucosamine-1-phosphate (GlcNAc-1-P), which is converted into UDP-GlcNAc by the transfer of uridine 5-monophosphate (from uridine 5-triphosphate), a reaction catalyzed by the N-terminal domain. The sequence is that of Bifunctional protein GlmU from Limosilactobacillus reuteri (strain DSM 20016) (Lactobacillus reuteri).